The following is a 740-amino-acid chain: Phosphoribosylformylglycinamidine synthase subunit PurL (740 aa).

H53 is an active-site residue. ATP-binding residues include Y56 and K95. E97 lines the Mg(2+) pocket. Substrate is bound by residues 98–101 and R120; that span reads SHNH. H99 (proton acceptor) is an active-site residue. Residue D121 coordinates Mg(2+). Position 244 (Q244) interacts with substrate. D274 provides a ligand contact to Mg(2+). 318–320 contacts substrate; sequence ESQ. ATP contacts are provided by D501 and G538. Mg(2+) is bound at residue N539. S541 serves as a coordination point for substrate.

Belongs to the FGAMS family. In terms of assembly, monomer. Part of the FGAM synthase complex composed of 1 PurL, 1 PurQ and 2 PurS subunits.

Its subcellular location is the cytoplasm. It carries out the reaction N(2)-formyl-N(1)-(5-phospho-beta-D-ribosyl)glycinamide + L-glutamine + ATP + H2O = 2-formamido-N(1)-(5-O-phospho-beta-D-ribosyl)acetamidine + L-glutamate + ADP + phosphate + H(+). It participates in purine metabolism; IMP biosynthesis via de novo pathway; 5-amino-1-(5-phospho-D-ribosyl)imidazole from N(2)-formyl-N(1)-(5-phospho-D-ribosyl)glycinamide: step 1/2. Its function is as follows. Part of the phosphoribosylformylglycinamidine synthase complex involved in the purines biosynthetic pathway. Catalyzes the ATP-dependent conversion of formylglycinamide ribonucleotide (FGAR) and glutamine to yield formylglycinamidine ribonucleotide (FGAM) and glutamate. The FGAM synthase complex is composed of three subunits. PurQ produces an ammonia molecule by converting glutamine to glutamate. PurL transfers the ammonia molecule to FGAR to form FGAM in an ATP-dependent manner. PurS interacts with PurQ and PurL and is thought to assist in the transfer of the ammonia molecule from PurQ to PurL. In Lactobacillus delbrueckii subsp. bulgaricus (strain ATCC 11842 / DSM 20081 / BCRC 10696 / JCM 1002 / NBRC 13953 / NCIMB 11778 / NCTC 12712 / WDCM 00102 / Lb 14), this protein is Phosphoribosylformylglycinamidine synthase subunit PurL.